A 157-amino-acid polypeptide reads, in one-letter code: NADPH-dependent 7-cyano-7-deazaguanine reductase (157 aa).

Cys-55 acts as the Thioimide intermediate in catalysis. Catalysis depends on Asp-62, which acts as the Proton donor. Substrate contacts are provided by residues 77–79 (VES) and 96–97 (HE).

Belongs to the GTP cyclohydrolase I family. QueF type 1 subfamily.

The protein resides in the cytoplasm. It catalyses the reaction 7-aminomethyl-7-carbaguanine + 2 NADP(+) = 7-cyano-7-deazaguanine + 2 NADPH + 3 H(+). Its pathway is tRNA modification; tRNA-queuosine biosynthesis. Functionally, catalyzes the NADPH-dependent reduction of 7-cyano-7-deazaguanine (preQ0) to 7-aminomethyl-7-deazaguanine (preQ1). This is NADPH-dependent 7-cyano-7-deazaguanine reductase from Neisseria gonorrhoeae (strain ATCC 700825 / FA 1090).